A 454-amino-acid polypeptide reads, in one-letter code: Bifunctional protein GlmU (454 aa).

The tract at residues 1-226 (MLAVAVLAAG…PDEVNGINNR (226 aa)) is pyrophosphorylase. UDP-N-acetyl-alpha-D-glucosamine contacts are provided by residues 7–10 (LAAG), Lys21, Gln73, and 78–79 (GT). Asp103 provides a ligand contact to Mg(2+). UDP-N-acetyl-alpha-D-glucosamine contacts are provided by Gly140, Glu155, Asn170, and Asn224. Residue Asn224 coordinates Mg(2+). The segment at 227–247 (RQLAQCEGVLQQRLRDHWMDE) is linker. Positions 248–454 (GVTFVDPASC…WDRNTQAAQS (207 aa)) are N-acetyltransferase. 2 residues coordinate UDP-N-acetyl-alpha-D-glucosamine: Arg329 and Lys347. His359 (proton acceptor) is an active-site residue. The UDP-N-acetyl-alpha-D-glucosamine site is built by Tyr362 and Asn373. Acetyl-CoA-binding residues include Ala376, Ala419, and Arg436.

This sequence in the N-terminal section; belongs to the N-acetylglucosamine-1-phosphate uridyltransferase family. In the C-terminal section; belongs to the transferase hexapeptide repeat family. Homotrimer. Mg(2+) serves as cofactor.

Its subcellular location is the cytoplasm. The enzyme catalyses alpha-D-glucosamine 1-phosphate + acetyl-CoA = N-acetyl-alpha-D-glucosamine 1-phosphate + CoA + H(+). It catalyses the reaction N-acetyl-alpha-D-glucosamine 1-phosphate + UTP + H(+) = UDP-N-acetyl-alpha-D-glucosamine + diphosphate. It participates in nucleotide-sugar biosynthesis; UDP-N-acetyl-alpha-D-glucosamine biosynthesis; N-acetyl-alpha-D-glucosamine 1-phosphate from alpha-D-glucosamine 6-phosphate (route II): step 2/2. The protein operates within nucleotide-sugar biosynthesis; UDP-N-acetyl-alpha-D-glucosamine biosynthesis; UDP-N-acetyl-alpha-D-glucosamine from N-acetyl-alpha-D-glucosamine 1-phosphate: step 1/1. Its pathway is bacterial outer membrane biogenesis; LPS lipid A biosynthesis. In terms of biological role, catalyzes the last two sequential reactions in the de novo biosynthetic pathway for UDP-N-acetylglucosamine (UDP-GlcNAc). The C-terminal domain catalyzes the transfer of acetyl group from acetyl coenzyme A to glucosamine-1-phosphate (GlcN-1-P) to produce N-acetylglucosamine-1-phosphate (GlcNAc-1-P), which is converted into UDP-GlcNAc by the transfer of uridine 5-monophosphate (from uridine 5-triphosphate), a reaction catalyzed by the N-terminal domain. In Synechococcus sp. (strain CC9311), this protein is Bifunctional protein GlmU.